The following is a 668-amino-acid chain: Trehalase (668 aa).

The interval Met1 to Val23 is disordered.

This sequence belongs to the glycosyl hydrolase 15 family. As to quaternary structure, homomultimer of 20 or more subunits. Mg(2+) is required as a cofactor. Phosphate serves as cofactor.

The catalysed reaction is alpha,alpha-trehalose + H2O = alpha-D-glucose + beta-D-glucose. It functions in the pathway glycan degradation; trehalose degradation; D-glucose from alpha,alpha-trehalose: step 1/1. With respect to regulation, inhibited by pyrophosphate and polyphosphates. Also competitively inhibited by validoxylamine and castanospermine, but not by trehazolin. Catalyzes the hydrolysis of alpha,alpha-trehalose into two molecules of D-glucose. Does not hydrolyze maltose, isomaltose, sucrose, cellobiose, p-nitrophenyl-alpha-D-glucopyranoside, and methyl-alpha-D-glucopyranoside. Is also inactive on alpha,beta-trehalose, beta,beta-trehalose, alpha,alpha-trehalose-6,6'-dibehenate, trehalulose, nigerose, and trehalose dimycolate. The protein is Trehalase of Mycolicibacterium smegmatis (strain ATCC 700084 / mc(2)155) (Mycobacterium smegmatis).